A 311-amino-acid chain; its full sequence is tRNA dimethylallyltransferase (311 aa).

Glycine 13 to threonine 20 is a binding site for ATP. Threonine 15–threonine 20 contacts substrate. 2 interaction with substrate tRNA regions span residues aspartate 38–glutamine 41 and glutamine 166–arginine 170.

It belongs to the IPP transferase family. Monomer. It depends on Mg(2+) as a cofactor.

It carries out the reaction adenosine(37) in tRNA + dimethylallyl diphosphate = N(6)-dimethylallyladenosine(37) in tRNA + diphosphate. Catalyzes the transfer of a dimethylallyl group onto the adenine at position 37 in tRNAs that read codons beginning with uridine, leading to the formation of N6-(dimethylallyl)adenosine (i(6)A). The sequence is that of tRNA dimethylallyltransferase from Staphylococcus aureus (strain MSSA476).